Consider the following 727-residue polypeptide: Elongation factor 2 (727 aa).

A tr-type G domain is found at 19–260 (DQIRNIGICA…MVVTHLPNPV (242 aa)). GTP-binding positions include 28 to 35 (AHIDHGKT), 94 to 98 (DTPGH), and 148 to 151 (NKVD). Histidine 603 carries the post-translational modification Diphthamide.

It belongs to the TRAFAC class translation factor GTPase superfamily. Classic translation factor GTPase family. EF-G/EF-2 subfamily.

It is found in the cytoplasm. Catalyzes the GTP-dependent ribosomal translocation step during translation elongation. During this step, the ribosome changes from the pre-translocational (PRE) to the post-translocational (POST) state as the newly formed A-site-bound peptidyl-tRNA and P-site-bound deacylated tRNA move to the P and E sites, respectively. Catalyzes the coordinated movement of the two tRNA molecules, the mRNA and conformational changes in the ribosome. The sequence is that of Elongation factor 2 from Methanococcus aeolicus (strain ATCC BAA-1280 / DSM 17508 / OCM 812 / Nankai-3).